The sequence spans 561 residues: MKLIYVFLLILAVRLASVFVVQTYYVPDEYWQSLEVAHKLTFGYGYLTWEWVQGIRSYVYPLLIAGLYKILALLQLDSAHLLVVLPRIVQALLSAYSDYRFFVWTGKRKWALFLILVPWFWFYTGSRTLANTLEASLTTIALSYFPWYGESTAYLWPAAICCFLRPTAAVIWLPLSLYHLRRSRQNVLELILKRFVLIGLLVAGLGIAIDTYWHGQLIVTPYEFLKYNIFNNIGSFYGSHPWHWYFSVGLPTVLGINTLPFIFGVMETVKKSEKYPVSKQLLITIFLTLVVLSAVEHKEFRFVSPLLPLCLYVITDALSRWSIRASSTMLWTTALVILVGNVMPAWYLSTVHQKGPIELMPKLREIAREYRDEREHQANILFLMPCHSTPYYSHIHQNVTMRFLTCEPNLEKKEQYKDEADRFFEDPVHWINSHIPMHPLTALPTHVVLFDPLAENISVFLRNYRLLHRIEHAEVTRLEGSQALVDQWSEALGAQSPNLASLLQNRQSRTGRSILVYQRLKKGEENAFNRGPDSGQHEPDVHDHPPLEDLVLANENENLFN.

Helical transmembrane passes span 3–25 (LIYV…QTYY), 64–84 (IAGL…LLVV), 110–130 (WALF…RTLA), 155–175 (LWPA…WLPL), 195–215 (FVLI…YWHG), 246–266 (FSVG…FGVM), 275–295 (YPVS…LSAV), and 328–348 (TMLW…AWYL). Residues N398 and N456 are each glycosylated (N-linked (GlcNAc...) asparagine). The interval 525–546 (ENAFNRGPDSGQHEPDVHDHPP) is disordered. The span at 535-546 (GQHEPDVHDHPP) shows a compositional bias: basic and acidic residues.

Belongs to the glycosyltransferase 22 family. PIGB subfamily.

The protein localises to the endoplasmic reticulum membrane. The protein operates within glycolipid biosynthesis; glycosylphosphatidylinositol-anchor biosynthesis. Mannosyltransferase involved in glycosylphosphatidylinositol-anchor biosynthesis. Transfers the third alpha-1,2-mannose to Man2-GlcN-acyl-PI during GPI precursor assembly. In Drosophila melanogaster (Fruit fly), this protein is GPI mannosyltransferase 3.